The following is a 236-amino-acid chain: 2,3,4,5-tetrahydropyridine-2,6-dicarboxylate N-acetyltransferase (236 aa).

Belongs to the transferase hexapeptide repeat family. DapH subfamily.

The catalysed reaction is (S)-2,3,4,5-tetrahydrodipicolinate + acetyl-CoA + H2O = L-2-acetamido-6-oxoheptanedioate + CoA. It participates in amino-acid biosynthesis; L-lysine biosynthesis via DAP pathway; LL-2,6-diaminopimelate from (S)-tetrahydrodipicolinate (acetylase route): step 1/3. Functionally, catalyzes the transfer of an acetyl group from acetyl-CoA to tetrahydrodipicolinate. The polypeptide is 2,3,4,5-tetrahydropyridine-2,6-dicarboxylate N-acetyltransferase (Listeria ivanovii).